A 161-amino-acid chain; its full sequence is Nucleotide-binding protein Rmet_2899 (161 aa).

It belongs to the YajQ family.

Nucleotide-binding protein. The polypeptide is Nucleotide-binding protein Rmet_2899 (Cupriavidus metallidurans (strain ATCC 43123 / DSM 2839 / NBRC 102507 / CH34) (Ralstonia metallidurans)).